The chain runs to 288 residues: Beta-lactamase CARB-3 (288 aa).

A signal peptide spans 1-17 (MKFLLAFSLLIPSVVFA). Ser-65 acts as the Acyl-ester intermediate in catalysis. An intrachain disulfide couples Cys-72 to Cys-118. Substrate is bound at residue 229 to 231 (RSG).

It belongs to the class-A beta-lactamase family.

The catalysed reaction is a beta-lactam + H2O = a substituted beta-amino acid. Functionally, hydrolyzes both carbenicillin and oxacillin. This is Beta-lactamase CARB-3 (carB3) from Pseudomonas aeruginosa.